The primary structure comprises 152 residues: Deoxyuridine 5'-triphosphate nucleotidohydrolase (152 aa).

Residues Arg-71 to Gly-73, Asn-84, Leu-88 to Asp-90, and Met-98 each bind substrate.

It belongs to the dUTPase family. Mg(2+) serves as cofactor.

It carries out the reaction dUTP + H2O = dUMP + diphosphate + H(+). The protein operates within pyrimidine metabolism; dUMP biosynthesis; dUMP from dCTP (dUTP route): step 2/2. Functionally, this enzyme is involved in nucleotide metabolism: it produces dUMP, the immediate precursor of thymidine nucleotides and it decreases the intracellular concentration of dUTP so that uracil cannot be incorporated into DNA. This is Deoxyuridine 5'-triphosphate nucleotidohydrolase from Shewanella piezotolerans (strain WP3 / JCM 13877).